The sequence spans 172 residues: CD164 sialomucin-like 2 protein (172 aa).

The signal sequence occupies residues 1–29 (MAAPGPRALRAALCGGCCCLLLCAQLVLA). Over 30–137 (GKGARGFGRG…PEDHSPGFDG (108 aa)) the chain is Extracellular. N-linked (GlcNAc...) asparagine glycosylation is found at N69 and N101. A disordered region spans residues 108–132 (ASHHHSTEEPKPSTTGSPPIPEDHS). Residues 138-158 (ASFIGGIVLVLSLQATAFFVL) form a helical membrane-spanning segment. The Cytoplasmic segment spans residues 159–172 (RFLKAKDSTYQTLI).

Belongs to the CD164 family.

It localises to the membrane. The protein is CD164 sialomucin-like 2 protein (Cd164l2) of Mus musculus (Mouse).